A 519-amino-acid polypeptide reads, in one-letter code: Histidine ammonia-lyase (519 aa).

The segment at residues 146–148 is a cross-link (5-imidazolinone (Ala-Gly)); that stretch reads ASG. Serine 147 bears the 2,3-didehydroalanine (Ser) mark.

This sequence belongs to the PAL/histidase family. Contains an active site 4-methylidene-imidazol-5-one (MIO), which is formed autocatalytically by cyclization and dehydration of residues Ala-Ser-Gly.

Its subcellular location is the cytoplasm. It carries out the reaction L-histidine = trans-urocanate + NH4(+). The protein operates within amino-acid degradation; L-histidine degradation into L-glutamate; N-formimidoyl-L-glutamate from L-histidine: step 1/3. This is Histidine ammonia-lyase from Psychrobacter sp. (strain PRwf-1).